The following is a 429-amino-acid chain: Serine--tRNA ligase (429 aa).

235–237 (TAE) is an L-serine binding site. Residue 266–268 (RSE) coordinates ATP. Glu289 lines the L-serine pocket. An ATP-binding site is contributed by 353 to 356 (EISS). Ser389 serves as a coordination point for L-serine.

Belongs to the class-II aminoacyl-tRNA synthetase family. Type-1 seryl-tRNA synthetase subfamily. As to quaternary structure, homodimer. The tRNA molecule binds across the dimer.

Its subcellular location is the cytoplasm. It carries out the reaction tRNA(Ser) + L-serine + ATP = L-seryl-tRNA(Ser) + AMP + diphosphate + H(+). It catalyses the reaction tRNA(Sec) + L-serine + ATP = L-seryl-tRNA(Sec) + AMP + diphosphate + H(+). The protein operates within aminoacyl-tRNA biosynthesis; selenocysteinyl-tRNA(Sec) biosynthesis; L-seryl-tRNA(Sec) from L-serine and tRNA(Sec): step 1/1. Its function is as follows. Catalyzes the attachment of serine to tRNA(Ser). Is also able to aminoacylate tRNA(Sec) with serine, to form the misacylated tRNA L-seryl-tRNA(Sec), which will be further converted into selenocysteinyl-tRNA(Sec). The polypeptide is Serine--tRNA ligase (Histophilus somni (strain 2336) (Haemophilus somnus)).